The primary structure comprises 292 residues: ATP synthase gamma chain (292 aa).

This sequence belongs to the ATPase gamma chain family. As to quaternary structure, F-type ATPases have 2 components, CF(1) - the catalytic core - and CF(0) - the membrane proton channel. CF(1) has five subunits: alpha(3), beta(3), gamma(1), delta(1), epsilon(1). CF(0) has three main subunits: a, b and c.

It localises to the cell inner membrane. Its function is as follows. Produces ATP from ADP in the presence of a proton gradient across the membrane. The gamma chain is believed to be important in regulating ATPase activity and the flow of protons through the CF(0) complex. The protein is ATP synthase gamma chain of Brucella abortus (strain S19).